Reading from the N-terminus, the 247-residue chain is ATP synthase subunit a, chloroplastic (247 aa).

5 helical membrane passes run 38 to 58 (QVLITSWVVITILLGSVLIAV), 95 to 115 (VPFIGTMFLFIFVSNWSGALL), 134 to 154 (INTTVALALLTSAAYFYAGLS), 199 to 219 (LVVVVLVSLVPLVVPIPVMFL), and 220 to 240 (GLFTSGIQALIFATLAAAYIG).

The protein belongs to the ATPase A chain family. In terms of assembly, F-type ATPases have 2 components, CF(1) - the catalytic core - and CF(0) - the membrane proton channel. CF(1) has five subunits: alpha(3), beta(3), gamma(1), delta(1), epsilon(1). CF(0) has four main subunits: a, b, b' and c.

Its subcellular location is the plastid. It localises to the chloroplast thylakoid membrane. In terms of biological role, key component of the proton channel; it plays a direct role in the translocation of protons across the membrane. This is ATP synthase subunit a, chloroplastic from Brachypodium distachyon (Purple false brome).